Here is a 240-residue protein sequence, read N- to C-terminus: Axial regulator YABBY 3 (240 aa).

Residues 30–57 (CSFCDTVLAVSVPPSSLFKTVTVRCGHC) form a C4-type zinc finger. The interval 135 to 156 (DHLQEMPRPPPANRPPEKRQRV) is disordered.

It belongs to the YABBY family. Interacts with SPL/NZZ. Interacts with SPEAR2. Binds to LUG and LUH; these complexes promote adaxial cell identity in leaves as well as embryonic shoot apical meristem (SAM) initiation and postembryonic SAM maintenance. In terms of tissue distribution, expressed in abaxial regions of lateral aerial organ primordia leading to cotyledons, leaves, flower meristems, sepals, petals, stamen and carpels, but not in roots.

It localises to the nucleus. Functionally, involved in the abaxial cell fate determination during embryogenesis and organogenesis. Regulates the initiation of embryonic shoot apical meristem (SAM) development. Contributes to the repression of KNOX genes (STM, KNAT1/BP and KNAT2) to avoid ectopic meristems. Binds DNA without sequence specificity. The protein is Axial regulator YABBY 3 (YAB3) of Arabidopsis thaliana (Mouse-ear cress).